The primary structure comprises 193 residues: Putative deoxynucleotide monophosphate kinase (193 aa).

Lys-10 lines the dGMP pocket. ATP contacts are provided by Gly-13 and Thr-16. The dGMP site is built by Leu-36, Lys-37, Lys-58, Asp-122, Arg-124, Glu-128, and Ser-155.

This sequence belongs to the dNMP kinase family.

The catalysed reaction is a 2'-deoxyribonucleoside 5'-phosphate + ATP = a 2'-deoxyribonucleoside 5'-diphosphate + ADP. This Acanthamoeba polyphaga mimivirus (APMV) protein is Putative deoxynucleotide monophosphate kinase.